A 202-amino-acid polypeptide reads, in one-letter code: Large ribosomal subunit protein uL18 (202 aa).

It belongs to the universal ribosomal protein uL18 family. Part of the 50S ribosomal subunit. Contacts the 5S and 23S rRNAs.

This is one of the proteins that bind and probably mediate the attachment of the 5S RNA into the large ribosomal subunit, where it forms part of the central protuberance. This is Large ribosomal subunit protein uL18 from Methanopyrus kandleri (strain AV19 / DSM 6324 / JCM 9639 / NBRC 100938).